The primary structure comprises 433 residues: MSKIVKVIGREIIDSRGNPTVEAEVHLEGGFVGLAAAPSGASTGSREALELRDGDKSRFLGKGVTKAVDAVNGPIAQALTCKDAKDQAALDKTMIDLDGTENKSKFGANAILAVSLAAAKAASASKGMPLYEHIAELNGTAGKFSMPLPMMNIINGGEHADNNVDIQEFMIQPVGAKSIKEAVRMGSEVFHNLAKVLKSKGMNTAVGDEGGYAPNLESNAAALAAIKEAVEKAGYMLGKDITLAMDCAASEFFGEATGNYNLKGEGKTFTSQEFTHYLEDLTKQYPIVSIEDGLNESDWDGFAYQTKVLGDKIQLVGDDLFVTNTKILKEGIEKGIANSILIKFNQIGSLTETLAAIKMAKDAGYTTIISHRSGETEDATIADLAVGTAAGQIKTGSMSRSDRVAKYNQLIRIEEALGDRAPFNGLREVKGQA.

A (2R)-2-phosphoglycerate-binding site is contributed by glutamine 167. Glutamate 209 acts as the Proton donor in catalysis. Mg(2+) contacts are provided by aspartate 246, glutamate 291, and aspartate 318. (2R)-2-phosphoglycerate is bound by residues lysine 343, arginine 372, serine 373, and lysine 394. The Proton acceptor role is filled by lysine 343.

It belongs to the enolase family. In terms of assembly, component of the RNA degradosome, a multiprotein complex involved in RNA processing and mRNA degradation. The cofactor is Mg(2+).

The protein resides in the cytoplasm. It is found in the secreted. Its subcellular location is the cell surface. The enzyme catalyses (2R)-2-phosphoglycerate = phosphoenolpyruvate + H2O. It functions in the pathway carbohydrate degradation; glycolysis; pyruvate from D-glyceraldehyde 3-phosphate: step 4/5. In terms of biological role, catalyzes the reversible conversion of 2-phosphoglycerate (2-PG) into phosphoenolpyruvate (PEP). It is essential for the degradation of carbohydrates via glycolysis. The protein is Enolase of Sodalis glossinidius (strain morsitans).